The following is a 423-amino-acid chain: Alpha-1-antichymotrypsin (423 aa).

A signal peptide spans 1–23 (MERMLPLLALGLLAAGFCPAVLC). N-linked (GlcNAc...) asparagine glycans are attached at residues N33, N93, N106, N127, and N186. Residues 235–237 (KKK) mediate DNA binding. N-linked (GlcNAc...) asparagine glycosylation is present at N271. The tract at residues 369 to 394 (GTEASAATAVKITLLSALVETRTIVR) is RCL. Residues 381–389 (TLLSALVET) form an O-glycosylated at one site region.

Belongs to the serpin family. In terms of assembly, interacts with DNAJC1. N- and O-glycosylated. Plasma. Synthesized in the liver. Like the related alpha-1-antitrypsin, its concentration increases in the acute phase of inflammation or infection. Found in the amyloid plaques from the hippocampus of Alzheimer disease brains.

Its subcellular location is the secreted. Its function is as follows. Although its physiological function is unclear, it can inhibit neutrophil cathepsin G and mast cell chymase, both of which can convert angiotensin-1 to the active angiotensin-2. This chain is Alpha-1-antichymotrypsin (SERPINA3), found in Homo sapiens (Human).